The following is a 255-amino-acid chain: Thiazole synthase (255 aa).

Lysine 95 (schiff-base intermediate with DXP) is an active-site residue. Residues glycine 156, 182-183 (AG), and 204-205 (NT) contribute to the 1-deoxy-D-xylulose 5-phosphate site.

The protein belongs to the ThiG family. In terms of assembly, homotetramer. Forms heterodimers with either ThiH or ThiS.

It localises to the cytoplasm. It carries out the reaction [ThiS sulfur-carrier protein]-C-terminal-Gly-aminoethanethioate + 2-iminoacetate + 1-deoxy-D-xylulose 5-phosphate = [ThiS sulfur-carrier protein]-C-terminal Gly-Gly + 2-[(2R,5Z)-2-carboxy-4-methylthiazol-5(2H)-ylidene]ethyl phosphate + 2 H2O + H(+). It functions in the pathway cofactor biosynthesis; thiamine diphosphate biosynthesis. Its function is as follows. Catalyzes the rearrangement of 1-deoxy-D-xylulose 5-phosphate (DXP) to produce the thiazole phosphate moiety of thiamine. Sulfur is provided by the thiocarboxylate moiety of the carrier protein ThiS. In vitro, sulfur can be provided by H(2)S. This chain is Thiazole synthase, found in Vibrio campbellii (strain ATCC BAA-1116).